Reading from the N-terminus, the 967-residue chain is RNA polymerase-associated protein RapA (967 aa).

Residues 163–337 (EVGQRTAPRV…FARLSLLDPD (175 aa)) form the Helicase ATP-binding domain. Residue 176-183 (DEVGLGKT) coordinates ATP. The DEAH box motif lies at 283–286 (DEAH). In terms of domain architecture, Helicase C-terminal spans 489-660 (RLEWLITFLK…KFLQNPTALE (172 aa)).

Belongs to the SNF2/RAD54 helicase family. RapA subfamily. In terms of assembly, interacts with the RNAP. Has a higher affinity for the core RNAP than for the holoenzyme. Its ATPase activity is stimulated by binding to RNAP.

Its function is as follows. Transcription regulator that activates transcription by stimulating RNA polymerase (RNAP) recycling in case of stress conditions such as supercoiled DNA or high salt concentrations. Probably acts by releasing the RNAP, when it is trapped or immobilized on tightly supercoiled DNA. Does not activate transcription on linear DNA. Probably not involved in DNA repair. This Pasteurella multocida (strain Pm70) protein is RNA polymerase-associated protein RapA.